The sequence spans 316 residues: Fe-S cluster assembly protein DRE2 (316 aa).

An N-terminal SAM-like domain region spans residues 4 to 156; the sequence is SMPVATTVAA…KPQHVASTSV (153 aa). Residues 157–202 form a linker region; sequence PLKSRQPGALLNRKKTDPAKKQALWALSSPSTPKIDPEALLTAEDK. Residues Cys209, Cys223, Cys226, and Cys228 each coordinate [2Fe-2S] cluster. The tract at residues 209-228 is fe-S binding site A; that stretch reads CEPVRSSAPRRKKACKSCSC. [4Fe-4S] cluster contacts are provided by Cys279, Cys282, Cys290, and Cys293. 2 consecutive short sequence motifs (cx2C motif) follow at residues 279-282 and 290-293; these read CGSC and CAGC. Residues 279-293 are fe-S binding site B; the sequence is CGSCFLGDAFRCAGC.

The protein belongs to the anamorsin family. As to quaternary structure, monomer. Interacts with TAH18. Interacts with MIA40. Requires [2Fe-2S] cluster as cofactor. The cofactor is [4Fe-4S] cluster.

Its subcellular location is the cytoplasm. It is found in the mitochondrion intermembrane space. In terms of biological role, component of the cytosolic iron-sulfur (Fe-S) protein assembly (CIA) machinery required for the maturation of extramitochondrial Fe-S proteins. Part of an electron transfer chain functioning in an early step of cytosolic Fe-S biogenesis, facilitating the de novo assembly of a [4Fe-4S] cluster on the scaffold complex CFD1-NBP35. Electrons are transferred to DRE2 from NADPH via the FAD- and FMN-containing protein TAH18. TAH18-DRE2 are also required for the assembly of the diferric tyrosyl radical cofactor of ribonucleotide reductase (RNR), probably by providing electrons for reduction during radical cofactor maturation in the catalytic small subunit RNR2. This is Fe-S cluster assembly protein DRE2 from Laccaria bicolor (strain S238N-H82 / ATCC MYA-4686) (Bicoloured deceiver).